Reading from the N-terminus, the 664-residue chain is DNA ligase (664 aa).

NAD(+)-binding positions include 32-36 and 80-81; these read DKDYD and SL. Residue Lys-122 is the N6-AMP-lysine intermediate of the active site. NAD(+) is bound by residues Arg-144, Glu-178, and Lys-314. Residues Cys-407, Cys-410, Cys-423, and Cys-429 each contribute to the Zn(2+) site. Residues 587–664 enclose the BRCT domain; it reads IKENIFNGKT…SEEDFKNMIG (78 aa).

The protein belongs to the NAD-dependent DNA ligase family. LigA subfamily. It depends on Mg(2+) as a cofactor. Requires Mn(2+) as cofactor.

It carries out the reaction NAD(+) + (deoxyribonucleotide)n-3'-hydroxyl + 5'-phospho-(deoxyribonucleotide)m = (deoxyribonucleotide)n+m + AMP + beta-nicotinamide D-nucleotide.. In terms of biological role, DNA ligase that catalyzes the formation of phosphodiester linkages between 5'-phosphoryl and 3'-hydroxyl groups in double-stranded DNA using NAD as a coenzyme and as the energy source for the reaction. It is essential for DNA replication and repair of damaged DNA. In Clostridium novyi (strain NT), this protein is DNA ligase.